A 223-amino-acid polypeptide reads, in one-letter code: UPF0502 protein Shew185_1758 (223 aa).

This sequence belongs to the UPF0502 family.

This Shewanella baltica (strain OS185) protein is UPF0502 protein Shew185_1758.